Reading from the N-terminus, the 515-residue chain is 2-isopropylmalate synthase (515 aa).

The Pyruvate carboxyltransferase domain occupies 5–267; the sequence is VIIFDTTLRD…STGIKHEEIH (263 aa). Residues D14, H202, H204, and N238 each coordinate Mn(2+). The regulatory domain stretch occupies residues 392–515; the sequence is KLNYLSVQSG…EMKQKKIATV (124 aa).

Belongs to the alpha-IPM synthase/homocitrate synthase family. LeuA type 1 subfamily. Homodimer. Requires Mn(2+) as cofactor.

The protein resides in the cytoplasm. It catalyses the reaction 3-methyl-2-oxobutanoate + acetyl-CoA + H2O = (2S)-2-isopropylmalate + CoA + H(+). It functions in the pathway amino-acid biosynthesis; L-leucine biosynthesis; L-leucine from 3-methyl-2-oxobutanoate: step 1/4. In terms of biological role, catalyzes the condensation of the acetyl group of acetyl-CoA with 3-methyl-2-oxobutanoate (2-ketoisovalerate) to form 3-carboxy-3-hydroxy-4-methylpentanoate (2-isopropylmalate). This Vibrio parahaemolyticus serotype O3:K6 (strain RIMD 2210633) protein is 2-isopropylmalate synthase.